Consider the following 305-residue polypeptide: Porphobilinogen deaminase (305 aa).

Cys-243 carries the S-(dipyrrolylmethanemethyl)cysteine modification.

Belongs to the HMBS family. In terms of assembly, monomer. Requires dipyrromethane as cofactor.

The catalysed reaction is 4 porphobilinogen + H2O = hydroxymethylbilane + 4 NH4(+). It functions in the pathway porphyrin-containing compound metabolism; protoporphyrin-IX biosynthesis; coproporphyrinogen-III from 5-aminolevulinate: step 2/4. In terms of biological role, tetrapolymerization of the monopyrrole PBG into the hydroxymethylbilane pre-uroporphyrinogen in several discrete steps. The polypeptide is Porphobilinogen deaminase (Limosilactobacillus reuteri (strain DSM 20016) (Lactobacillus reuteri)).